The sequence spans 324 residues: Acetyl-coenzyme A carboxylase carboxyl transferase subunit alpha (324 aa).

Residues 37–291 enclose the CoA carboxyltransferase C-terminal domain; it reads ILEDKLENLE…DLMLRKTFEQ (255 aa).

The protein belongs to the AccA family. As to quaternary structure, acetyl-CoA carboxylase is a heterohexamer composed of biotin carboxyl carrier protein (AccB), biotin carboxylase (AccC) and two subunits each of ACCase subunit alpha (AccA) and ACCase subunit beta (AccD).

The protein resides in the cytoplasm. It catalyses the reaction N(6)-carboxybiotinyl-L-lysyl-[protein] + acetyl-CoA = N(6)-biotinyl-L-lysyl-[protein] + malonyl-CoA. It functions in the pathway lipid metabolism; malonyl-CoA biosynthesis; malonyl-CoA from acetyl-CoA: step 1/1. In terms of biological role, component of the acetyl coenzyme A carboxylase (ACC) complex. First, biotin carboxylase catalyzes the carboxylation of biotin on its carrier protein (BCCP) and then the CO(2) group is transferred by the carboxyltransferase to acetyl-CoA to form malonyl-CoA. In Bacillus cereus (strain Q1), this protein is Acetyl-coenzyme A carboxylase carboxyl transferase subunit alpha.